A 144-amino-acid chain; its full sequence is uncharacterized protein (144 aa).

4 helical membrane-spanning segments follow: residues 7–29, 51–73, 85–107, and 122–139; these read FPAS…RDLV, VAIG…FLLV, AVLA…VGAF, and HLHH…LIFV.

The protein resides in the cell membrane. This is an uncharacterized protein from Treponema pallidum (strain Nichols).